We begin with the raw amino-acid sequence, 69 residues long: Neurotoxin Cex3 (69 aa).

A signal peptide is located at residue alanine 1. The LCN-type CS-alpha/beta domain maps to 2–67 (KDGYLVNKST…TYPLPNKSCG (66 aa)). Intrachain disulfides connect cysteine 13–cysteine 66, cysteine 17–cysteine 42, cysteine 26–cysteine 47, and cysteine 30–cysteine 49. Cysteine amide is present on cysteine 66. Residues 67–69 (GRK) constitute a propeptide that is removed on maturation.

It belongs to the long (4 C-C) scorpion toxin superfamily. Sodium channel inhibitor family. Beta subfamily. In terms of tissue distribution, expressed by the venom gland.

Its subcellular location is the secreted. Its function is as follows. Beta toxins bind voltage-independently at site-4 of sodium channels (Nav) and shift the voltage of activation toward more negative potentials thereby affecting sodium channel activation and promoting spontaneous and repetitive firing. This is Neurotoxin Cex3 from Centruroides exilicauda (Bark scorpion).